A 250-amino-acid polypeptide reads, in one-letter code: GILT-like protein 1 (250 aa).

The first 21 residues, 1–21, serve as a signal peptide directing secretion; sequence MSHKIAAVCLLMSCLIATAYS. A glycan (N-linked (GlcNAc...) asparagine) is linked at asparagine 157.

This sequence belongs to the GILT family. Conjugated to URM1, a ubiquitin-like protein.

The protein localises to the secreted. Functionally, involved in the immune response to bacterial infection. The chain is GILT-like protein 1 from Drosophila melanogaster (Fruit fly).